The following is a 101-amino-acid chain: Protein S100-A7-like 2 (101 aa).

EF-hand domains are found at residues 13–48 (IVAM…SGCE) and 50–85 (SDMD…ITID). Residues aspartate 63, asparagine 65, aspartate 67, lysine 69, and glutamate 74 each contribute to the Ca(2+) site. 2 residues coordinate Zn(2+): histidine 87 and histidine 91.

It belongs to the S-100 family.

In Homo sapiens (Human), this protein is Protein S100-A7-like 2 (S100A7L2).